Reading from the N-terminus, the 219-residue chain is Thiopurine S-methyltransferase (219 aa).

Residues W10, L45, E66, and R123 each coordinate S-adenosyl-L-methionine.

The protein belongs to the class I-like SAM-binding methyltransferase superfamily. TPMT family.

It is found in the cytoplasm. It carries out the reaction S-adenosyl-L-methionine + a thiopurine = S-adenosyl-L-homocysteine + a thiopurine S-methylether.. This Bordetella petrii (strain ATCC BAA-461 / DSM 12804 / CCUG 43448) protein is Thiopurine S-methyltransferase.